The primary structure comprises 512 residues: Altronate oxidoreductase (512 aa).

Position 26–37 (26–37 (VLQFGEGNFLRG)) interacts with NAD(+).

This sequence belongs to the mannitol dehydrogenase family. UxaB subfamily.

It catalyses the reaction D-altronate + NAD(+) = keto-D-tagaturonate + NADH + H(+). The protein operates within carbohydrate metabolism; pentose and glucuronate interconversion. The chain is Altronate oxidoreductase from Halalkalibacterium halodurans (strain ATCC BAA-125 / DSM 18197 / FERM 7344 / JCM 9153 / C-125) (Bacillus halodurans).